The primary structure comprises 64 residues: Beta sliding clamp (64 aa).

Belongs to the beta sliding clamp family. As to quaternary structure, forms a ring-shaped head-to-tail homodimer around DNA which binds and tethers DNA polymerases and other proteins to the DNA. The DNA replisome complex has a single clamp-loading complex (3 tau and 1 each of delta, delta', psi and chi subunits) which binds 3 Pol III cores (1 core on the leading strand and 2 on the lagging strand) each with a beta sliding clamp dimer. Additional proteins in the replisome are other copies of gamma, psi and chi, Ssb, DNA helicase and RNA primase.

The protein localises to the cytoplasm. Functionally, confers DNA tethering and processivity to DNA polymerases and other proteins. Acts as a clamp, forming a ring around DNA (a reaction catalyzed by the clamp-loading complex) which diffuses in an ATP-independent manner freely and bidirectionally along dsDNA. Initially characterized for its ability to contact the catalytic subunit of DNA polymerase III (Pol III), a complex, multichain enzyme responsible for most of the replicative synthesis in bacteria; Pol III exhibits 3'-5' exonuclease proofreading activity. The beta chain is required for initiation of replication as well as for processivity of DNA replication. This is Beta sliding clamp (dnaN) from Actinobacillus pleuropneumoniae (Haemophilus pleuropneumoniae).